The sequence spans 373 residues: GTP cyclohydrolase 1 type 2 homolog (373 aa).

A divalent metal cation is bound by residues histidine 67, histidine 68, aspartate 106, histidine 333, and glutamate 336.

This sequence belongs to the GTP cyclohydrolase I type 2/NIF3 family. In terms of assembly, homohexamer.

The sequence is that of GTP cyclohydrolase 1 type 2 homolog from Listeria innocua serovar 6a (strain ATCC BAA-680 / CLIP 11262).